The sequence spans 317 residues: Probable GTP 3',8-cyclase (317 aa).

The region spanning 4 to 223 (RYGRPLEDLR…KSEIREKHFR (220 aa)) is the Radical SAM core domain. Residue Arg-13 coordinates GTP. Positions 20, 24, and 27 each coordinate [4Fe-4S] cluster. Residue Lys-61 participates in GTP binding. Residue Gly-65 participates in S-adenosyl-L-methionine binding. GTP is bound at residue Thr-91. Residue Ser-115 participates in S-adenosyl-L-methionine binding. Lys-152 contributes to the GTP binding site. 2 residues coordinate [4Fe-4S] cluster: Cys-246 and Cys-249. Residue 251–253 (RVR) participates in GTP binding. Cys-263 lines the [4Fe-4S] cluster pocket.

Belongs to the radical SAM superfamily. MoaA family. Requires [4Fe-4S] cluster as cofactor.

The enzyme catalyses GTP + AH2 + S-adenosyl-L-methionine = (8S)-3',8-cyclo-7,8-dihydroguanosine 5'-triphosphate + 5'-deoxyadenosine + L-methionine + A + H(+). The protein operates within cofactor biosynthesis; molybdopterin biosynthesis. Functionally, catalyzes the cyclization of GTP to (8S)-3',8-cyclo-7,8-dihydroguanosine 5'-triphosphate. The protein is Probable GTP 3',8-cyclase of Metallosphaera sedula (strain ATCC 51363 / DSM 5348 / JCM 9185 / NBRC 15509 / TH2).